Consider the following 120-residue polypeptide: UPF0102 protein Moth_0988 (120 aa).

Belongs to the UPF0102 family.

The polypeptide is UPF0102 protein Moth_0988 (Moorella thermoacetica (strain ATCC 39073 / JCM 9320)).